Reading from the N-terminus, the 490-residue chain is Glutamate--tRNA ligase (490 aa).

A 'HIGH' region motif is present at residues 13-23; it reads PSPTGTPHVGL. A 'KMSKS' region motif is present at residues 257 to 261; sequence KLSKR. Lysine 260 is an ATP binding site.

Belongs to the class-I aminoacyl-tRNA synthetase family. Glutamate--tRNA ligase type 1 subfamily. In terms of assembly, monomer.

It localises to the cytoplasm. It catalyses the reaction tRNA(Glu) + L-glutamate + ATP = L-glutamyl-tRNA(Glu) + AMP + diphosphate. Its function is as follows. Catalyzes the attachment of glutamate to tRNA(Glu) in a two-step reaction: glutamate is first activated by ATP to form Glu-AMP and then transferred to the acceptor end of tRNA(Glu). This chain is Glutamate--tRNA ligase, found in Mycobacterium bovis (strain BCG / Pasteur 1173P2).